Here is a 1427-residue protein sequence, read N- to C-terminus: DNA-directed RNA polymerase subunit beta' (1427 aa).

The Zn(2+) site is built by Cys70, Cys72, Cys85, and Cys88. Mg(2+)-binding residues include Asp461, Asp463, and Asp465. Zn(2+) contacts are provided by Cys809, Cys882, Cys889, and Cys892. The disordered stretch occupies residues 1394-1427; that stretch reads EAAIGDDPLGKVQGEDFTTDDVMVEERPEGASEE. Residues 1417 to 1427 show a composition bias toward basic and acidic residues; it reads VEERPEGASEE.

The protein belongs to the RNA polymerase beta' chain family. As to quaternary structure, the RNAP catalytic core consists of 2 alpha, 1 beta, 1 beta' and 1 omega subunit. When a sigma factor is associated with the core the holoenzyme is formed, which can initiate transcription. Requires Mg(2+) as cofactor. Zn(2+) is required as a cofactor.

The catalysed reaction is RNA(n) + a ribonucleoside 5'-triphosphate = RNA(n+1) + diphosphate. Its function is as follows. DNA-dependent RNA polymerase catalyzes the transcription of DNA into RNA using the four ribonucleoside triphosphates as substrates. The polypeptide is DNA-directed RNA polymerase subunit beta' (Sphingopyxis alaskensis (strain DSM 13593 / LMG 18877 / RB2256) (Sphingomonas alaskensis)).